Here is a 518-residue protein sequence, read N- to C-terminus: 3-octaprenyl-4-hydroxybenzoate carboxy-lyase (518 aa).

Asn-177 lines the Mn(2+) pocket. Prenylated FMN contacts are provided by residues 180–182 (IYR), 194–196 (RWL), and 199–200 (RG). Residue Glu-243 coordinates Mn(2+). Catalysis depends on Asp-318, which acts as the Proton donor.

It belongs to the UbiD family. Homohexamer. The cofactor is prenylated FMN. Requires Mn(2+) as cofactor.

Its subcellular location is the cell membrane. It carries out the reaction a 4-hydroxy-3-(all-trans-polyprenyl)benzoate + H(+) = a 2-(all-trans-polyprenyl)phenol + CO2. It functions in the pathway cofactor biosynthesis; ubiquinone biosynthesis. Functionally, catalyzes the decarboxylation of 3-octaprenyl-4-hydroxy benzoate to 2-octaprenylphenol, an intermediate step in ubiquinone biosynthesis. In Burkholderia lata (strain ATCC 17760 / DSM 23089 / LMG 22485 / NCIMB 9086 / R18194 / 383), this protein is 3-octaprenyl-4-hydroxybenzoate carboxy-lyase.